A 297-amino-acid polypeptide reads, in one-letter code: Phosphatidylinositol N-acetylglucosaminyltransferase subunit C (297 aa).

Transmembrane regions (helical) follow at residues 51–71, 80–100, 117–137, 153–173, 174–194, 196–216, 227–244, and 250–270; these read VVFE…FVVI, LAPH…YVLF, WADL…SPVL, SVFM…AAIV, SSTL…SRLP, SLHA…WPML, SYVG…GGLL, and GAVL…FYLI.

Belongs to the PIGC family. Component of the glycosylphosphatidylinositol-N-acetylglucosaminyltransferase (GPI-GnT) complex composed at least by PIGA, PIGC, PIGH, PIGP, PIGQ, PIGY and DPM2. Interacts with PIGQ. Interacts with the heterodimer PIGA:PIGH.

Its subcellular location is the endoplasmic reticulum membrane. Its pathway is glycolipid biosynthesis; glycosylphosphatidylinositol-anchor biosynthesis. Its function is as follows. Part of the glycosylphosphatidylinositol-N-acetylglucosaminyltransferase (GPI-GnT) complex that catalyzes the transfer of N-acetylglucosamine from UDP-N-acetylglucosamine to phosphatidylinositol and participates in the first step of GPI biosynthesis. In Homo sapiens (Human), this protein is Phosphatidylinositol N-acetylglucosaminyltransferase subunit C.